We begin with the raw amino-acid sequence, 202 residues long: uncharacterized protein (202 aa).

The tract at residues 178–202 is disordered; it reads VCSSEDSEADRYSDYGWGGPSSPFN.

This is an uncharacterized protein from Homo sapiens (Human).